Here is a 149-residue protein sequence, read N- to C-terminus: Sex-regulated protein janus-A (149 aa).

K46 lines the substrate pocket. H77 acts as the Proton acceptor in catalysis. Substrate is bound at residue 118–120; it reads STG.

Belongs to the janus family.

JanA and janB regulate somatic sex differentiation. The protein is Sex-regulated protein janus-A (janA) of Drosophila pseudoobscura pseudoobscura (Fruit fly).